The chain runs to 505 residues: L-carnitine/gamma-butyrobetaine antiporter (505 aa).

Transmembrane regions (helical) follow at residues 10 to 30 (IEPK…WLTV), 51 to 71 (WGWA…WLVF), 92 to 112 (IFMM…SIEI), 143 to 163 (GPLP…FFFV), 195 to 215 (FYLV…TPLV), 231 to 251 (LDAI…ACGL), 263 to 283 (SYLS…SFIM), 316 to 336 (WTVF…IFLA), 347 to 367 (LCFG…TVLG), 403 to 423 (LSTA…VTLI), 446 to 466 (LLVR…LLAL), and 475 to 495 (AIIA…LSFI).

The protein belongs to the BCCT transporter (TC 2.A.15) family. CaiT subfamily. As to quaternary structure, homotrimer.

Its subcellular location is the cell inner membrane. It carries out the reaction 4-(trimethylamino)butanoate(in) + (R)-carnitine(out) = 4-(trimethylamino)butanoate(out) + (R)-carnitine(in). The protein operates within amine and polyamine metabolism; carnitine metabolism. In terms of biological role, catalyzes the exchange of L-carnitine for gamma-butyrobetaine. The chain is L-carnitine/gamma-butyrobetaine antiporter from Salmonella paratyphi A (strain ATCC 9150 / SARB42).